The primary structure comprises 214 residues: DELTA-actitoxin-Aeq1a (214 aa).

An N-terminal signal peptide occupies residues 1-19 (MSRLIIVFIVVTMICSATA). Positions 20 to 35 (LPSKKIIDEDEEDEKR) are excised as a propeptide. Residues 38-47 (DVAGAVIDGA) form a plays an important role in the hemolytic activity region. The N-terminal region stretch occupies residues 46-65 (GASLSFDILKTVLEALGNVK). S89, V122, S140, P142, Y168, Y172, and Y173 together coordinate phosphocholine. Residues 140 to 155 (SVPYDYNWYSNWWNVR) form a trp-rich region, which is important for the binding to lipid membrane region. The short motif at 179–181 (RGD) is the Cell attachment site, crucial for protein stability element.

This sequence belongs to the actinoporin family. Sea anemone subfamily. Octamer or nonamer in membranes. Monomer in the soluble state.

The protein localises to the secreted. The protein resides in the nematocyst. It is found in the target cell membrane. Pore-forming protein that forms cations-selective hydrophilic pores of around 1 nm and causes cardiac stimulation and cytolysis. Pore formation is a multi-step process that involves specific recognition of membrane sphingomyelin (but neither cholesterol nor phosphatidylcholine) using aromatic rich region and adjacent phosphocholine (POC) binding site, firm binding to the membrane (mainly driven by hydrophobic interactions) accompanied by the transfer of the N-terminal region to the lipid-water interface and finally pore formation after oligomerization of monomers. Cytolytic effects include red blood cells hemolysis, platelet aggregation and lysis, cytotoxic and cytostatic effects on fibroblasts. Lethality in mammals has been ascribed to severe vasospasm of coronary vessels, cardiac arrhythmia, and inotropic effects. The chain is DELTA-actitoxin-Aeq1a from Actinia equina (Beadlet anemone).